Here is a 1042-residue protein sequence, read N- to C-terminus: Glutamate dehydrogenase 2 (1042 aa).

K596 is an active-site residue. An ADP-ribosylarginine; by Legionella Lart1 modification is found at R763.

It belongs to the Glu/Leu/Phe/Val dehydrogenases family. In terms of assembly, homodimer. Post-translationally, (Microbial infection) ADP-ribosylated at Arg-763 by the Legionella pneumophila effector Lart1, which inhibits the glutamate dehydrogenase activity. Amoeba are natural hosts of Legionella, and ADP-ribosylation by Lart1 may promote Legionella parasitism.

The protein resides in the cytoplasm. It carries out the reaction L-glutamate + NAD(+) + H2O = 2-oxoglutarate + NH4(+) + NADH + H(+). Its activity is regulated as follows. Activity is stimulated by AMP. (Microbial infection) Inhibited by ADP-ribosylation. The protein is Glutamate dehydrogenase 2 (glud2) of Dictyostelium discoideum (Social amoeba).